A 64-amino-acid chain; its full sequence is Beta-defensin 13 (64 aa).

An N-terminal signal peptide occupies residues 1-22; the sequence is MRIFSLIVAGLVLLIQLYPAWG. 3 disulfides stabilise this stretch: Cys-30/Cys-57, Cys-37/Cys-51, and Cys-41/Cys-58.

It belongs to the beta-defensin family. Expressed in testis and to a lesser extent in epididymis (caput, corpus and cauda). Also weakly expressed in kidneys.

It localises to the secreted. Has antibacterial activity. This chain is Beta-defensin 13 (Defb13), found in Mus musculus (Mouse).